Reading from the N-terminus, the 752-residue chain is Cation-transporting P-type ATPase B (752 aa).

In terms of domain architecture, HMA spans 15–78 (RRIRLDVLGM…VVEKAGYHAA (64 aa)). A metal cation-binding residues include Cys26 and Cys29. A run of 6 helical transmembrane segments spans residues 105 to 125 (LLVA…FAIV), 132 to 152 (GWGY…AWPF), 167 to 187 (METL…SSVF), 201 to 221 (AILN…VFVL), 361 to 381 (IAGV…AAWL), and 390 to 410 (AFSV…GLAT). The active-site 4-aspartylphosphate intermediate is Asp446. 2 consecutive transmembrane segments (helical) span residues 491-511 (MAAA…FVAV) and 714-734 (AIPI…AMAF).

Belongs to the cation transport ATPase (P-type) (TC 3.A.3) family. Type IB subfamily.

Its subcellular location is the cell membrane. The catalysed reaction is ATP + H2O = ADP + phosphate + H(+). The chain is Cation-transporting P-type ATPase B (ctpB) from Mycobacterium tuberculosis (strain ATCC 25618 / H37Rv).